We begin with the raw amino-acid sequence, 242 residues long: NAD-dependent protein deacetylase (242 aa).

A Deacetylase sirtuin-type domain is found at M1–K242. Residues A23, T27, F34, R35, Q102, I104, D105, and H120 each contribute to the NAD(+) site. A nicotinamide-binding site is contributed by F34. I104 and D105 together coordinate nicotinamide. The Proton acceptor role is filled by H120. Positions 128, 131, 148, and 151 each coordinate Zn(2+). Positions 187, 188, 213, and 231 each coordinate NAD(+).

The protein belongs to the sirtuin family. Class U subfamily. It depends on Zn(2+) as a cofactor.

The protein localises to the cytoplasm. The catalysed reaction is N(6)-acetyl-L-lysyl-[protein] + NAD(+) + H2O = 2''-O-acetyl-ADP-D-ribose + nicotinamide + L-lysyl-[protein]. In terms of biological role, NAD-dependent protein deacetylase which modulates the activities of several enzymes which are inactive in their acetylated form. The protein is NAD-dependent protein deacetylase of Bacillus anthracis.